The chain runs to 65 residues: Alpha-insect toxin BotIT1 (65 aa).

Residues 2–64 (RDAYIAQNYN…VPIRIPGKCH (63 aa)) form the LCN-type CS-alpha/beta domain. 4 disulfide bridges follow: cysteine 12-cysteine 63, cysteine 16-cysteine 36, cysteine 22-cysteine 46, and cysteine 26-cysteine 48.

Belongs to the long (4 C-C) scorpion toxin superfamily. Sodium channel inhibitor family. Alpha subfamily. As to expression, expressed by the venom gland.

It is found in the secreted. Its function is as follows. Alpha toxins bind voltage-independently at site-3 of sodium channels (Nav) and inhibit the inactivation of the activated channels, thereby blocking neuronal transmission. This contractive toxin is highly toxic to insects and barely toxic to mammals. This is Alpha-insect toxin BotIT1 from Buthus occitanus tunetanus (Common European scorpion).